The sequence spans 445 residues: Xylose isomerase (445 aa).

Active-site residues include His-107 and Asp-110. Mg(2+)-binding residues include Glu-238, Glu-274, His-277, Asp-302, Asp-313, Asp-315, and Asp-345.

The protein belongs to the xylose isomerase family. In terms of assembly, homotetramer. Requires Mg(2+) as cofactor.

Its subcellular location is the cytoplasm. It carries out the reaction alpha-D-xylose = alpha-D-xylulofuranose. This is Xylose isomerase (xylA) from Priestia megaterium (strain DSM 319 / IMG 1521) (Bacillus megaterium).